A 547-amino-acid polypeptide reads, in one-letter code: CAP-Gly domain-containing linker protein 3 (547 aa).

The disordered stretch occupies residues 1-49 (MTKTDPAPMAPPPRGEEEEEEEEDEPVPEAPSPTQERRQKPVVHPSAPA). Residues 16–27 (EEEEEEEEDEPV) are compositionally biased toward acidic residues. ANK repeat units follow at residues 117–158 (TDMT…LRSR), 160–191 (TNMN…VVNS), and 197–229 (NHGS…LRNR). Positions 314 to 356 (GTTEFASGQWVGVELDEPEGKNDGSVGGVRYFICPPKQGLFAS) constitute a CAP-Gly 1 domain. A disordered region spans residues 365 to 413 (DAPPSSVTSTPRTPRMDFSRVTGKGRREHKGKKKTPSSPSLGSLQQRDG). Residues 367 to 377 (PPSSVTSTPRT) show a composition bias toward low complexity. Residue threonine 374 is modified to Phosphothreonine. A compositionally biased stretch (basic residues) spans 387–399 (GKGRREHKGKKKT). A compositionally biased stretch (polar residues) spans 400 to 410 (PSSPSLGSLQQ). Serine 401 is subject to Phosphoserine. Residues 436-478 (GKTDFAPGYWYGIELDQPTGKHDGSVFGVRYFTCPPRHGVFAP) form the CAP-Gly 2 domain. Residues 488-547 (STDSPGDSVGAKKVHQVTMTQPKRTFTTVRTPKDIASENSISRLLFCCWFPWMLRAEMQS) form a goLD region. 2 S-palmitoyl cysteine lipidation sites follow: cysteine 534 and cysteine 535.

In terms of assembly, homodimer. Interacts with AKT1 and AKT2; when AKT1 and AKT2 are phosphorylated and activated, affinity is higher for AKT2. Interacts with ZDHHC13 (via ANK repeats). Interacts with ZDHHC17 (via ANK repeats). Post-translationally, palmitoylation by ZDHHC17 regulates association with the plasma membrane.

The protein resides in the cell membrane. The protein localises to the cytoplasm. It is found in the golgi apparatus. Its subcellular location is the golgi stack. Its function is as follows. Functions as a cytoplasmic linker protein. Involved in TGN-endosome dynamics. May modulate the cellular compartmentalization of AKT kinase family and promote its cell membrane localization, thereby playing a role in glucose transport in adipocytes. The chain is CAP-Gly domain-containing linker protein 3 (CLIP3) from Homo sapiens (Human).